Consider the following 181-residue polypeptide: Isopentenyl-diphosphate Delta-isomerase (181 aa).

Mn(2+) contacts are provided by His29 and His36. The Nudix hydrolase domain occupies Pro34–Glu167. Residue Cys71 is part of the active site. His73 serves as a coordination point for Mn(2+). Glu91 serves as a coordination point for Mg(2+). Glu118 and Glu120 together coordinate Mn(2+). Residue Glu120 is part of the active site.

The protein belongs to the IPP isomerase type 1 family. The cofactor is Mg(2+). Mn(2+) serves as cofactor.

It is found in the cytoplasm. The enzyme catalyses isopentenyl diphosphate = dimethylallyl diphosphate. It participates in isoprenoid biosynthesis; dimethylallyl diphosphate biosynthesis; dimethylallyl diphosphate from isopentenyl diphosphate: step 1/1. Functionally, catalyzes the 1,3-allylic rearrangement of the homoallylic substrate isopentenyl (IPP) to its highly electrophilic allylic isomer, dimethylallyl diphosphate (DMAPP). The sequence is that of Isopentenyl-diphosphate Delta-isomerase from Mycolicibacterium vanbaalenii (strain DSM 7251 / JCM 13017 / BCRC 16820 / KCTC 9966 / NRRL B-24157 / PYR-1) (Mycobacterium vanbaalenii).